We begin with the raw amino-acid sequence, 201 residues long: ATP-dependent Clp protease proteolytic subunit (201 aa).

Catalysis depends on S98, which acts as the Nucleophile. H123 is a catalytic residue.

It belongs to the peptidase S14 family. Fourteen ClpP subunits assemble into 2 heptameric rings which stack back to back to give a disk-like structure with a central cavity, resembling the structure of eukaryotic proteasomes.

It is found in the cytoplasm. It carries out the reaction Hydrolysis of proteins to small peptides in the presence of ATP and magnesium. alpha-casein is the usual test substrate. In the absence of ATP, only oligopeptides shorter than five residues are hydrolyzed (such as succinyl-Leu-Tyr-|-NHMec, and Leu-Tyr-Leu-|-Tyr-Trp, in which cleavage of the -Tyr-|-Leu- and -Tyr-|-Trp bonds also occurs).. In terms of biological role, cleaves peptides in various proteins in a process that requires ATP hydrolysis. Has a chymotrypsin-like activity. Plays a major role in the degradation of misfolded proteins. The sequence is that of ATP-dependent Clp protease proteolytic subunit from Desulfatibacillum aliphaticivorans.